The sequence spans 288 residues: NAD kinase (288 aa).

Asp73 serves as the catalytic Proton acceptor. Residues 73–74 (DG), Arg78, 144–145 (NE), Asp174, 185–190 (TAYSLS), and Ala209 each bind NAD(+).

Belongs to the NAD kinase family. Requires a divalent metal cation as cofactor.

It localises to the cytoplasm. It carries out the reaction NAD(+) + ATP = ADP + NADP(+) + H(+). Functionally, involved in the regulation of the intracellular balance of NAD and NADP, and is a key enzyme in the biosynthesis of NADP. Catalyzes specifically the phosphorylation on 2'-hydroxyl of the adenosine moiety of NAD to yield NADP. The chain is NAD kinase from Porphyromonas gingivalis (strain ATCC BAA-308 / W83).